The chain runs to 270 residues: Putative phosphatase YxeH (270 aa).

Aspartate 8 serves as the catalytic Nucleophile. Aspartate 8 lines the Mg(2+) pocket. Position 9 (methionine 9) interacts with phosphate. Aspartate 10 is a Mg(2+) binding site. Phosphate-binding positions include 42-43 and lysine 196; that span reads TG. Aspartate 219 lines the Mg(2+) pocket. Phosphate is bound at residue asparagine 222.

It belongs to the HAD-like hydrolase superfamily. Cof family. Mg(2+) serves as cofactor.

This Bacillus subtilis (strain 168) protein is Putative phosphatase YxeH (yxeH).